A 449-amino-acid polypeptide reads, in one-letter code: Tubulin alpha-B chain (449 aa).

Residues Q11, E71, S140, G144, T145, T179, N206, and N228 each contribute to the GTP site. E71 is a binding site for Mg(2+). The active site involves E254.

The protein belongs to the tubulin family. As to quaternary structure, dimer of alpha and beta chains. A typical microtubule is a hollow water-filled tube with an outer diameter of 25 nm and an inner diameter of 15 nM. Alpha-beta heterodimers associate head-to-tail to form protofilaments running lengthwise along the microtubule wall with the beta-tubulin subunit facing the microtubule plus end conferring a structural polarity. Microtubules usually have 13 protofilaments but different protofilament numbers can be found in some organisms and specialized cells. Mg(2+) is required as a cofactor.

It localises to the cytoplasm. The protein localises to the cytoskeleton. The enzyme catalyses GTP + H2O = GDP + phosphate + H(+). In terms of biological role, tubulin is the major constituent of microtubules, a cylinder consisting of laterally associated linear protofilaments composed of alpha- and beta-tubulin heterodimers. Microtubules grow by the addition of GTP-tubulin dimers to the microtubule end, where a stabilizing cap forms. Below the cap, tubulin dimers are in GDP-bound state, owing to GTPase activity of alpha-tubulin. This is Tubulin alpha-B chain (tba-2) from Neurospora crassa (strain ATCC 24698 / 74-OR23-1A / CBS 708.71 / DSM 1257 / FGSC 987).